A 778-amino-acid chain; its full sequence is MKTRYSVLSVAMTAAFYTQYAQADLREQCLLGVPHFQGEEVTGDQIMMPIEIEADNAVINQPKDATYTGDVAIKQGNRSLFADEVRVEQNGEQERRAFLKGSYRYQDNLIQAHGRDAAMDLGSETAELQNTEFQLVGRQGRGTAESGSFNHNKRILKNATFTACLPNDNAWSIEGNEMIQHIDEEYAEIWHARFKVLGMPVFYSPYLQFPIGDRRRSGLLIPNFHRSSKDGFAYSQPFYWNIAPNMDATITPTYYSRRGWQISPEYRYLTKLGEGIVAGEYIGKDRLDEYRPDDNNRKRYLMHWRHNMSFLTGWRLYVDYTKVSDKRYFSDFDSEYGSSTDGYATQQFKLGYYQPNYNLSISGKKFQTFDELDVGPYRVLPQIDFNYYNDELVKGGDFKLFAQTARFENDSKLMPKAWRFHVEPTLNFPLANRYGSLNFETKLYATHYLQEKGSSKQADDMDKNVTRIIPQVKVDLQTVLEADKQLFKGFNQTFEPRVQYVYRPYKDQSNIGSGLNQSVSFGYDSALLQSDYFSLFNDRRYSGLDRISSANLITAGGTNRFFNEKTGVEVFNFSIGQTYYLSPSKIDDLSQNSTTKRSSSWALESNWKFHRKWNWHGAYQYDTRLNQTSLANTSLQYKPSQDKLVQLSYRFASKDYINQNLRSNTYGQDIKQVGAVVGWELTDRVAFMASHYHDIALKKPVESQLSVNYNTCCWSANVYVARKLTATPIGSPDTINDLYYDNKFGVNFELRFGTNYSSGVRKMLKKGMIPYTEQYGIN.

A signal peptide spans 1–23; that stretch reads MKTRYSVLSVAMTAAFYTQYAQA.

It belongs to the LptD family. As to quaternary structure, component of the lipopolysaccharide transport and assembly complex. Interacts with LptE and LptA.

Its subcellular location is the cell outer membrane. Functionally, together with LptE, is involved in the assembly of lipopolysaccharide (LPS) at the surface of the outer membrane. This chain is LPS-assembly protein LptD, found in Actinobacillus pleuropneumoniae serotype 7 (strain AP76).